A 282-amino-acid polypeptide reads, in one-letter code: 4-diphosphocytidyl-2-C-methyl-D-erythritol kinase (282 aa).

Residue Lys-9 is part of the active site. 98 to 108 (PMGGGLGGGSS) lines the ATP pocket. Residue Asp-140 is part of the active site.

Belongs to the GHMP kinase family. IspE subfamily. As to quaternary structure, homodimer.

The catalysed reaction is 4-CDP-2-C-methyl-D-erythritol + ATP = 4-CDP-2-C-methyl-D-erythritol 2-phosphate + ADP + H(+). It functions in the pathway isoprenoid biosynthesis; isopentenyl diphosphate biosynthesis via DXP pathway; isopentenyl diphosphate from 1-deoxy-D-xylulose 5-phosphate: step 3/6. Catalyzes the phosphorylation of the position 2 hydroxy group of 4-diphosphocytidyl-2C-methyl-D-erythritol. The sequence is that of 4-diphosphocytidyl-2-C-methyl-D-erythritol kinase from Salmonella paratyphi A (strain ATCC 9150 / SARB42).